Consider the following 66-residue polypeptide: Truncated interferon antagonist OPG039 (66 aa).

An ANK repeat occupies 29 to 58 (HGHSALYYAIADNNMRLVCTLLNAGALKNL).

Belongs to the orthopoxvirus OPG039 family.

In Homo sapiens (Human), this protein is Truncated interferon antagonist OPG039 (OPG040).